We begin with the raw amino-acid sequence, 455 residues long: Tyramine receptor Ser-2 (455 aa).

At 1–60 the chain is on the extracellular side; that stretch reads MFRNYTDSVQEMVLRAIDSIRDSVINASSAVSTTTLPPLDIPMTSMKPPSIIPTVELVLG. Residues asparagine 4 and asparagine 26 are each glycosylated (N-linked (GlcNAc...) asparagine). A helical transmembrane segment spans residues 61–83; it reads TITYLVIIAMTVVGNTLVVVAVF. Topologically, residues 84 to 93 are cytoplasmic; that stretch reads SYRPLKKVQN. Residues 94–115 form a helical membrane-spanning segment; that stretch reads YFLVSLAASDLAVAIFVMPLHV. Residues 116 to 133 are Extracellular-facing; sequence VTFLAGGKWLLGVTVCQF. Cysteine 131 and cysteine 209 are joined by a disulfide. A helical transmembrane segment spans residues 134-154; the sequence is FTTADILLCTSSILNLCAIAL. Topologically, residues 155 to 174 are cytoplasmic; the sequence is DRYWAIHNPINYAQKRTTKF. Residues 175 to 197 form a helical membrane-spanning segment; it reads VCIVIVIVWILSMLISVPPIIGW. Over 198-221 the chain is Extracellular; the sequence is NNWQENMMEDSCGLSTEKAFVVFS. The helical transmembrane segment at 222 to 243 threads the bilayer; sequence AAGSFFLPLLVMVVVYVKIFIS. Residues 244-370 are Cytoplasmic-facing; the sequence is ARQRIRTNRG…VAKEKRAAKT (127 aa). Residues 371–392 form a helical membrane-spanning segment; the sequence is IAVIIFVFSFCWLPFFVAYVIR. Residues 393-407 lie on the Extracellular side of the membrane; sequence PFCETCKLHAKVEQA. Residues 408–428 form a helical membrane-spanning segment; sequence FTWLGYINSSLNPFLYGILNL. Residues 429 to 455 are Cytoplasmic-facing; the sequence is EFRRAFKKILCPKAVLEQRRRRMSAQP.

The protein belongs to the G-protein coupled receptor 1 family. In terms of tissue distribution, the different isoforms are expressed in specific, but overlapping sets of sensory, inter- and motor neurons, including AIY, AIZ and RIA interneurons. They are also expressed in pharyngeal cells, head muscles and excretory gland cells.

The protein resides in the cell membrane. Functionally, G-protein coupled receptor for tyramine, a known neurotransmitter and neuromodulator and direct precursor of octopamine. The rank order of potency is tyramine &gt; octopamine &gt; dopamine &gt; serotonin &gt; epinephrine = norepinephrine. The protein is Tyramine receptor Ser-2 (ser-2) of Caenorhabditis elegans.